A 59-amino-acid chain; its full sequence is Ribosome biogenesis protein Nop10 (59 aa).

Belongs to the NOP10 family.

Involved in ribosome biogenesis; more specifically in 18S rRNA pseudouridylation and in cleavage of pre-rRNA. The protein is Ribosome biogenesis protein Nop10 of Thermococcus kodakarensis (strain ATCC BAA-918 / JCM 12380 / KOD1) (Pyrococcus kodakaraensis (strain KOD1)).